The primary structure comprises 101 residues: Small ribosomal subunit protein uS14 (101 aa).

Belongs to the universal ribosomal protein uS14 family. In terms of assembly, part of the 30S ribosomal subunit. Contacts proteins S3 and S10.

Binds 16S rRNA, required for the assembly of 30S particles and may also be responsible for determining the conformation of the 16S rRNA at the A site. In Synechococcus sp. (strain JA-2-3B'a(2-13)) (Cyanobacteria bacterium Yellowstone B-Prime), this protein is Small ribosomal subunit protein uS14.